The following is a 294-amino-acid chain: Ribosomal RNA small subunit methyltransferase A (294 aa).

Residues Asn-29, Val-31, Gly-56, Glu-77, Asp-107, and Asn-126 each contribute to the S-adenosyl-L-methionine site.

It belongs to the class I-like SAM-binding methyltransferase superfamily. rRNA adenine N(6)-methyltransferase family. RsmA subfamily.

It is found in the cytoplasm. It carries out the reaction adenosine(1518)/adenosine(1519) in 16S rRNA + 4 S-adenosyl-L-methionine = N(6)-dimethyladenosine(1518)/N(6)-dimethyladenosine(1519) in 16S rRNA + 4 S-adenosyl-L-homocysteine + 4 H(+). In terms of biological role, specifically dimethylates two adjacent adenosines (A1518 and A1519) in the loop of a conserved hairpin near the 3'-end of 16S rRNA in the 30S particle. May play a critical role in biogenesis of 30S subunits. The chain is Ribosomal RNA small subunit methyltransferase A from Mycobacterium sp. (strain MCS).